The following is an 856-amino-acid chain: Glucans biosynthesis glucosyltransferase H (856 aa).

6 consecutive transmembrane segments (helical) span residues 144–164 (ILLV…KGIM), 198–218 (ILIM…TALM), 517–537 (VFLT…FLVL), 574–594 (LFST…ILIW), 608–628 (TLSM…RMIF), and 691–711 (IVGS…VGLG).

This sequence belongs to the glycosyltransferase 2 family. OpgH subfamily.

The protein localises to the cell inner membrane. Its pathway is glycan metabolism; osmoregulated periplasmic glucan (OPG) biosynthesis. Functionally, involved in the biosynthesis of osmoregulated periplasmic glucans (OPGs). The polypeptide is Glucans biosynthesis glucosyltransferase H (Pseudomonas fluorescens (strain Pf0-1)).